Reading from the N-terminus, the 330-residue chain is Aspartate--ammonia ligase (330 aa).

It belongs to the class-II aminoacyl-tRNA synthetase family. AsnA subfamily.

Its subcellular location is the cytoplasm. It carries out the reaction L-aspartate + NH4(+) + ATP = L-asparagine + AMP + diphosphate + H(+). It functions in the pathway amino-acid biosynthesis; L-asparagine biosynthesis; L-asparagine from L-aspartate (ammonia route): step 1/1. In Escherichia coli O17:K52:H18 (strain UMN026 / ExPEC), this protein is Aspartate--ammonia ligase.